Here is a 371-residue protein sequence, read N- to C-terminus: Vasopressin V2 receptor (371 aa).

A disordered region spans residues Met1–Glu27. The Extracellular portion of the chain corresponds to Met1 to Arg38. The span at Ser15–Ser24 shows a compositional bias: low complexity. A glycan (N-linked (GlcNAc...) asparagine) is linked at Asn22. Residues Ala39–Ile63 traverse the membrane as a helical segment. The Cytoplasmic segment spans residues Arg64 to Phe77. The chain crosses the membrane as a helical span at residues Ile78–Ala98. The Extracellular segment spans residues Trp99–Arg113. Residues Ala114–Leu135 form a helical membrane-spanning segment. The Cytoplasmic portion of the chain corresponds to Asp136–Pro159. Residues Val160–Gln180 form a helical membrane-spanning segment. Residues Arg181–Trp200 are Extracellular-facing. Asn185 is a glycosylation site (N-linked (GlcNAc...) asparagine). A helical membrane pass occupies residues Gly201–Gly220. Residues Ile221–Arg271 lie on the Cytoplasmic side of the membrane. A disordered region spans residues Pro240–Gly259. Residues Met272–Trp293 traverse the membrane as a helical segment. Residues Ala294–Val308 lie on the Extracellular side of the membrane. Residues Leu309–Phe328 traverse the membrane as a helical segment. The Cytoplasmic segment spans residues Ser329 to Ser371. 2 S-palmitoyl cysteine lipidation sites follow: Cys341 and Cys342. The interval His349 to Ser371 is disordered. Positions Ser357 to Ser371 are enriched in polar residues.

It belongs to the G-protein coupled receptor 1 family. Vasopressin/oxytocin receptor subfamily. In terms of assembly, interacts with ARRDC4. Identified in a complex containing at least ARRDC4, V2R and HGS. Interacts with TMEM147. Highly expressed in kidney (at protein level) and moderately expressed in liver (at protein level). No or extremely low expression in left ventricule, muscle, bone and brain (at protein level).

The protein localises to the cell membrane. Its function is as follows. Receptor for arginine vasopressin. The activity of this receptor is mediated by G proteins which activate adenylate cyclase. Involved in renal water reabsorption. This chain is Vasopressin V2 receptor (Avpr2), found in Mus musculus (Mouse).